The following is a 30-amino-acid chain: Photosystem I reaction center subunit XII (30 aa).

A helical membrane pass occupies residues 7 to 29 (VYTVLLIALLASVLAIRLGSTLY).

Belongs to the PsaM family.

The protein resides in the plastid. Its subcellular location is the chloroplast thylakoid membrane. The sequence is that of Photosystem I reaction center subunit XII from Trieres chinensis (Marine centric diatom).